A 220-amino-acid polypeptide reads, in one-letter code: Fructose-6-phosphate aldolase (220 aa).

Lysine 85 functions as the Schiff-base intermediate with substrate in the catalytic mechanism.

This sequence belongs to the transaldolase family. Type 3A subfamily. As to quaternary structure, homodecamer.

The protein resides in the cytoplasm. It carries out the reaction beta-D-fructose 6-phosphate = dihydroxyacetone + D-glyceraldehyde 3-phosphate. Functionally, catalyzes the reversible formation of fructose 6-phosphate from dihydroxyacetone and D-glyceraldehyde 3-phosphate via an aldolization reaction. The sequence is that of Fructose-6-phosphate aldolase from Salmonella choleraesuis (strain SC-B67).